The following is a 968-amino-acid chain: RNA polymerase-associated protein RapA (968 aa).

The region spanning 163 to 332 (EVGQRFAPRV…FARLRLLDPD (170 aa)) is the Helicase ATP-binding domain. An ATP-binding site is contributed by 176–183 (DEVGLGKT). The DEAH box motif lies at 278 to 281 (DEAH). The Helicase C-terminal domain maps to 491–678 (RVDWLIDFLK…GTKARYQELK (188 aa)).

The protein belongs to the SNF2/RAD54 helicase family. RapA subfamily. In terms of assembly, interacts with the RNAP. Has a higher affinity for the core RNAP than for the holoenzyme. Its ATPase activity is stimulated by binding to RNAP.

Its function is as follows. Transcription regulator that activates transcription by stimulating RNA polymerase (RNAP) recycling in case of stress conditions such as supercoiled DNA or high salt concentrations. Probably acts by releasing the RNAP, when it is trapped or immobilized on tightly supercoiled DNA. Does not activate transcription on linear DNA. Probably not involved in DNA repair. In Shewanella pealeana (strain ATCC 700345 / ANG-SQ1), this protein is RNA polymerase-associated protein RapA.